The sequence spans 324 residues: Aquaporin-4 (324 aa).

Topologically, residues 1 to 36 (MSDRPAARPWGKCGSLCRREEIMVAFKGVWTQAFWK) are cytoplasmic. Residues Cys13 and Cys17 are each lipidated (S-palmitoyl cysteine). Residues 37-57 (AVTAEFLAMLIFVLLSLGSTI) traverse the membrane as a helical segment. The Extracellular segment spans residues 58-69 (NWGGKENPLPVD). The chain crosses the membrane as a helical span at residues 70-89 (MVLISLCFGLSIATMVQCFG). Residues 90-93 (HISG) lie on the Cytoplasmic side of the membrane. Residues 94–101 (GHINPAVT) constitute an intramembrane region (discontinuously helical). The NPA 1 motif lies at 97–99 (NPA). The Cytoplasmic segment spans residues 102 to 115 (VAMVCTRKISIAKS). A Phosphoserine; by PKG modification is found at Ser111. A helical transmembrane segment spans residues 116–136 (VFYIAAQCLGAIIGAGILYLV). Residues 137–155 (TPPSVVGGLGVTTVHGNLT) lie on the Extracellular side of the membrane. N-linked (GlcNAc...) asparagine glycosylation occurs at Asn153. Residues 156–176 (AGHGLLVELIITFQLVFTIFA) traverse the membrane as a helical segment. At 177-184 (SCDSKRTD) the chain is on the cytoplasmic side. The residue at position 180 (Ser180) is a Phosphoserine; by PKC. A helical transmembrane segment spans residues 185-205 (VTGSIALAIGFSVAIGHLFAI). Asn206 carries N-linked (GlcNAc...) asparagine glycosylation. Residues 206–208 (NYT) are Extracellular-facing. Positions 209-222 (GASMNPARSFGPAV) form an intramembrane region, discontinuously helical. The short motif at 213–215 (NPA) is the NPA 2 element. At 223–231 (IMGNWENHW) the chain is on the extracellular side. Residues 232–252 (IYWVGPIIGAVLAGGLYEYVF) form a helical membrane-spanning segment. At 253–324 (CPDVELKRRF…PSGEIAQTQH (72 aa)) the chain is on the cytoplasmic side. Phosphoserine is present on residues Ser276 and Ser285. Thr289 carries the phosphothreonine modification. Basic and acidic residues predominate over residues 305–316 (DRGDEKKGKDPS). A disordered region spans residues 305–324 (DRGDEKKGKDPSGEIAQTQH).

The protein belongs to the MIP/aquaporin (TC 1.A.8) family. In terms of assembly, homotetramer. The tetramers can form oligomeric arrays in membranes. The size of the oligomers differs between tissues and is smaller in skeletal muscle than in brain. Interaction between AQP4 oligomeric arrays in close-by cells can contribute to cell-cell adhesion. Part of a complex containing MLC1, TRPV4, HEPACAM and ATP1B1. Post-translationally, phosphorylation by PKC at Ser-180 reduces conductance by 50%. Phosphorylation by PKG at Ser-111 in response to glutamate increases conductance by 40%. Isoform 2: Palmitoylated on its N-terminal region. Isoform 1: Not palmitoylated. As to expression, not expressed in kidney, Detectable in gastric parietal and brain astroglial cells. The absence of AQP4 in kidney may be critical for the extreme urinary concentration that occurs in this species (up to 5,000 mosmol/kg H(2)O).

It is found in the cell membrane. The protein resides in the basolateral cell membrane. It localises to the endosome membrane. The protein localises to the sarcolemma. Its subcellular location is the cell projection. The catalysed reaction is H2O(in) = H2O(out). Its function is as follows. Forms a water-specific channel. Plays an important role in brain water homeostasis and in glymphatic solute transport. Required for a normal rate of water exchange across the blood brain interface. Required for normal levels of cerebrospinal fluid influx into the brain cortex and parenchyma along paravascular spaces that surround penetrating arteries, and for normal drainage of interstitial fluid along paravenous drainage pathways. Thereby, it is required for normal clearance of solutes from the brain interstitial fluid, including soluble beta-amyloid peptides derived from APP. Plays a redundant role in urinary water homeostasis and urinary concentrating ability. This Dipodomys merriami (Merriam's kangaroo rat) protein is Aquaporin-4 (AQP4).